A 949-amino-acid polypeptide reads, in one-letter code: ATPase 1, plasma membrane-type (949 aa).

Ser-2 carries the N-acetylserine modification. The Cytoplasmic portion of the chain corresponds to 2–61 (SGLEDIKNETVDLEKIPIEEVFQQLKCTREGLTTQEGEDRIVIFGPNKLEEKKESKILKF). The chain crosses the membrane as a helical span at residues 62–81 (LGFMWNPLSWVMEAAALMAI). Topologically, residues 82 to 93 (ALANGDNRPPDW) are extracellular. A helical transmembrane segment spans residues 94-114 (QDFVGIICLLVINSTISFIEE). The Cytoplasmic portion of the chain corresponds to 115 to 243 (NNAGNAAAAL…GHFQKVLTSI (129 aa)). Residues 244–264 (GNFCICSIAIGIAIEIVVMYP) traverse the membrane as a helical segment. The Extracellular segment spans residues 265 to 273 (IQHRKYRDG). A helical membrane pass occupies residues 274–291 (IDNLLVLLIGGIPIAMPT). At 292 to 643 (VLSVTMAIGS…TSRAIFQRMK (352 aa)) the chain is on the cytoplasmic side. The active-site 4-aspartylphosphate intermediate is the Asp-329. Mg(2+) contacts are provided by Asp-588 and Asp-592. Residues 644 to 665 (NYTIYAVSITIRIVFGFMLIAL) form a helical membrane-spanning segment. The Extracellular segment spans residues 666-670 (IWEFD). Residues 671–693 (FSAFMVLIIAILNDGTIMTISKD) form a helical membrane-spanning segment. Residues 694 to 709 (RVKPSPTPDSWKLKEI) are Cytoplasmic-facing. The chain crosses the membrane as a helical span at residues 710-730 (FATGIVLGGYQAIMSVIFFWA). The Extracellular segment spans residues 731–751 (AHKTDFFSDKFGVRSIRDNND). Residues 752–772 (ELMGAVYLQVSIISQALIFVT) form a helical membrane-spanning segment. Topologically, residues 773–784 (RSRSWSFVERPG) are cytoplasmic. The chain crosses the membrane as a helical span at residues 785–805 (ALLMIAFVIAQLVATLIAVYA). The Extracellular segment spans residues 806 to 813 (DWTFAKVK). Residues 814–834 (GIGWGWAGVIWIYSIVTYFPQ) traverse the membrane as a helical segment. The Cytoplasmic segment spans residues 835-949 (DILKFAIRYI…IDTAGHHYTV (115 aa)). Thr-881 carries the post-translational modification Phosphothreonine. 2 positions are modified to phosphoserine: Ser-899 and Ser-931. The interval 947-949 (YTV) is interaction with 14-3-3 proteins. Phosphothreonine is present on Thr-948.

The protein belongs to the cation transport ATPase (P-type) (TC 3.A.3) family. Type IIIA subfamily. In terms of assembly, binds to 14-3-3 proteins. The binding is induced by phosphorylation of Thr-948. Binding to 14-3-3 proteins activates the H(+)-ATPase. Interacts with PPI1; this interaction promotes ATPase activity. Interacts with PSY1R. Part of a functional complex containing PSKR1, BAK1, CNGC17, and AHA. Interacts with CNGC17 and PSKR1. Triggered by SAUR9 via the phosphorylation of the C-terminal autoinhibitory domain. Interacts with AHA2. Binds to CBC1 and CBC2. In terms of processing, phosphorylated, probably by PHOT1 and PHOT2, at C-terminal Thr-948 in guard cells in response to blue light to induce stomatal opening. Expressed in guard cells, mesophyll cells, leaves and roots.

It is found in the cell membrane. It carries out the reaction ATP + H2O + H(+)(in) = ADP + phosphate + 2 H(+)(out). Its activity is regulated as follows. Phosphorylation on Thr residues is repressed by tyrphostin 9, sphingosine, GW5074 and BML-265. By contrast, the fungal phytotoxin fusicoccin (FC) promotes phosphorylation of Thr-948 independently to BHP, thus leading to large stomatal opening. Functionally, the plasma membrane H(+) ATPase of plants and fungi generates a proton gradient that drives the active transport of nutrients by H(+)-symport. The resulting external acidification and/or internal alkinization may mediate growth responses. Forms a functional cation-translocating unit with CNGC17 that is activated by PSKR1/BAK1 and possibly other BAK1/RLK complexes. Promotes stomatal opening in response to blue light. This is ATPase 1, plasma membrane-type from Arabidopsis thaliana (Mouse-ear cress).